Reading from the N-terminus, the 1036-residue chain is Lethal(2) giant larvae protein homolog 1 (1036 aa).

WD repeat units lie at residues 38-71, 78-119, 139-175, 199-233, 239-271, 289-331, 339-373, 395-473, 517-592, and 601-662; these read SALA…FTGL, VTQM…GLSF, VTVV…GQTL, SLQG…EHVF, LESL…GSPP, AINK…ETLV, VIDF…VLDL, TCSA…YKLS, QKVA…RMLI, and TAVT…LRQS. Ser-662 carries the phosphoserine modification. Residues 667 to 677 are compositionally biased toward basic residues; sequence RKSRVSGKKRT. A disordered region spans residues 667–688; sequence RKSRVSGKKRTPAASSKLQEAN. Residues 679-688 are compositionally biased toward polar residues; it reads AASSKLQEAN. WD repeat units follow at residues 722 to 782, 791 to 843, 848 to 901, and 915 to 938; these read VRCL…KEVQ, AIAV…VSAK, LTAH…VHYS, and VFTR…SLSA. Thr-957 is modified (phosphothreonine). Phosphoserine occurs at positions 964, 982, and 989. The disordered stretch occupies residues 980 to 1002; the sequence is PESCEGSPSSAHSKRADTMEPPE.

This sequence belongs to the WD repeat L(2)GL family. In terms of assembly, associated with nonmuscle myosin II heavy chain. Interacts with PRKCI/aPKC, PARD6B/Par-6 and PARD6A. Interacts with STX4A. Interacts with RAB10 (GDP-bound form); the interaction is direct and promotes RAB10 association with membranes and activation through competition with the Rab inhibitor GDI1. Interacts with DCAF1. In terms of processing, phosphorylated by PRKCI. In terms of tissue distribution, widely expressed. Expressed in brain, ovary, testis, with moderate expression in lever, uterus, lung and kidney.

It is found in the early endosome membrane. The protein localises to the golgi apparatus. Its subcellular location is the trans-Golgi network membrane. The protein resides in the cell projection. It localises to the axon. It is found in the golgi apparatus membrane. The protein localises to the cytoplasm. Its subcellular location is the cytoskeleton. Its function is as follows. Cortical cytoskeleton protein found in a complex involved in maintaining cell polarity and epithelial integrity. Involved in the regulation of mitotic spindle orientation, proliferation, differentiation and tissue organization of neuroepithelial cells. Involved in axonogenesis through RAB10 activation thereby regulating vesicular membrane trafficking toward the axonal plasma membrane. The sequence is that of Lethal(2) giant larvae protein homolog 1 (LLGL1) from Bos taurus (Bovine).